We begin with the raw amino-acid sequence, 196 residues long: uncharacterized protein (196 aa).

Residues 7-67 (RNTKEKILTA…AVIDNHVKIW (61 aa)) enclose the HTH tetR-type domain. Positions 30–49 (SINDILDETATGKGQFYYYF) form a DNA-binding region, H-T-H motif.

This is an uncharacterized protein from Lactococcus lactis subsp. lactis (Streptococcus lactis).